A 184-amino-acid polypeptide reads, in one-letter code: Tyrosine-protein kinase receptor Tie-1 (184 aa).

The region spanning 1-164 (QLLQFAADVA…RMQEARKAYV (164 aa)) is the Protein kinase domain. The Proton acceptor role is filled by D25. Position 53 is a phosphotyrosine; by autocatalysis (Y53).

The protein belongs to the protein kinase superfamily. Tyr protein kinase family. Tie subfamily. In terms of assembly, interacts with svep1. Expressed in most populations of endothelial cells in 24 hours embryos, including the endocardium.

The protein localises to the cell membrane. The catalysed reaction is L-tyrosyl-[protein] + ATP = O-phospho-L-tyrosyl-[protein] + ADP + H(+). Its function is as follows. Transmembrane tyrosine-protein kinase. Required for the formation of facial lymphatic structures and brain lymphatic endothelial cells. Also required for embryonic ventral and dorsal migration of parachordal lymphoblasts along the arterial intersegmental vessel. Plays a role in the embryonic formation of the dorsal longitudinal anastomotic vessel. This chain is Tyrosine-protein kinase receptor Tie-1 (tie1), found in Danio rerio (Zebrafish).